Consider the following 244-residue polypeptide: MFRIISKATLFQDSQRFHTSILSPRCAFHNGGILHKKAKDKDVKHDHDPEFANSFNKMLKSFEAKMQLVHEKLAKRFQEAVVLPSQGNFTQLEALFIPSKSIKAPTPSRLLREIAAVSQKGSQQIIIRPFEDVDIKNILKAIEDSRYPFVANKLNASTIEVKPQRTTLESRQQLAKVLEGYAKDSREQLSAMRTELKKEIAKNKKSKAWTSDDCYKAEAEMQTAFKNAINLLDSGLKSALKKVI.

Belongs to the RRF family.

Its subcellular location is the mitochondrion. In terms of biological role, necessary for protein synthesis in mitochondria. Functions as a ribosome recycling factor in mitochondria. This chain is Putative ribosomal recycling factor, mitochondrial (rrf1), found in Schizosaccharomyces pombe (strain 972 / ATCC 24843) (Fission yeast).